A 536-amino-acid chain; its full sequence is Membrane protein insertase YidC (536 aa).

Helical transmembrane passes span 3–23, 346–366, 417–437, 454–474, and 494–514; these read LQRNFFILIFFFISFLLWKTW, ICGNWGVSIILITFIIKGITF, GGCFPLFIQMPIFLALYYMLI, LSDQDPFYVLPILMGVTMFFI, and IPILFTVFFLWFPSGLVLYYL.

The protein belongs to the OXA1/ALB3/YidC family. Type 1 subfamily. Interacts with the Sec translocase complex via SecD. Specifically interacts with transmembrane segments of nascent integral membrane proteins during membrane integration.

Its subcellular location is the cell membrane. In terms of biological role, required for the insertion and/or proper folding and/or complex formation of integral membrane proteins into the membrane. Involved in integration of membrane proteins that insert both dependently and independently of the Sec translocase complex, as well as at least some lipoproteins. Aids folding of multispanning membrane proteins. The protein is Membrane protein insertase YidC of Buchnera aphidicola subsp. Baizongia pistaciae (strain Bp).